The chain runs to 168 residues: 3-isopropylmalate dehydratase small subunit (168 aa).

It belongs to the LeuD family. LeuD type 2 subfamily. In terms of assembly, heterodimer of LeuC and LeuD.

The enzyme catalyses (2R,3S)-3-isopropylmalate = (2S)-2-isopropylmalate. It participates in amino-acid biosynthesis; L-leucine biosynthesis; L-leucine from 3-methyl-2-oxobutanoate: step 2/4. Its function is as follows. Catalyzes the isomerization between 2-isopropylmalate and 3-isopropylmalate, via the formation of 2-isopropylmaleate. The protein is 3-isopropylmalate dehydratase small subunit (leuD) of Sulfurisphaera tokodaii (strain DSM 16993 / JCM 10545 / NBRC 100140 / 7) (Sulfolobus tokodaii).